A 100-amino-acid chain; its full sequence is Vesicle-associated membrane protein 8 (100 aa).

The Cytoplasmic portion of the chain corresponds to 1-74 (MEASGSAGND…ARKFWWKNVK (74 aa)). Residues serine 4 and serine 17 each carry the phosphoserine modification. A v-SNARE coiled-coil homology domain is found at 11 to 71 (RVRNLQSEVE…QKVARKFWWK (61 aa)). A phosphothreonine mark is found at threonine 27, threonine 47, and threonine 53. Serine 54 carries the phosphoserine modification. The chain crosses the membrane as a helical; Anchor for type IV membrane protein span at residues 75–95 (MIVIICVIVLIILILIILFAT). Residues 96 to 100 (GTIPT) are Vesicular-facing.

Belongs to the synaptobrevin family. In terms of assembly, forms a SNARE complex composed of VAMP8, SNAP29 and STX17 involved in fusion of autophagosome with lysosome. Found in a number of SNARE complexes with NAPA, SNAP23, SNAP25, STX1A, STX4, STX7, STX8 and VTI1B. Interacts with PICALM. SNARE complex formation and binding by PICALM are mutually exclusive processes for VAMP8. Interacts with SBF2/MTMR13. Interacts with RAB21 (in GTP-bound form) in response to starvation; the interaction probably regulates VAMP8 endolysosomal trafficking. Interacts with STX17; this interaction is increased in the absence of TMEM39A. Interacts with TRIM6. Expressed (at protein level) at a high level in kidney, lung and spleen; at a lower level in testis, liver, brain and heart. Expressed in kidney and retinal pigment epithelium derived cell line.

Its subcellular location is the lysosome membrane. The protein resides in the late endosome membrane. It is found in the early endosome membrane. It localises to the midbody. The protein localises to the cell membrane. Its subcellular location is the zymogen granule membrane. SNAREs, soluble N-ethylmaleimide-sensitive factor-attachment protein receptors, are essential proteins for fusion of cellular membranes. SNAREs localized on opposing membranes assemble to form a trans-SNARE complex, an extended, parallel four alpha-helical bundle that drives membrane fusion. VAMP8 is a SNARE involved in autophagy through the direct control of autophagosome membrane fusion with the lysososome membrane via its interaction with the STX17-SNAP29 binary t-SNARE complex. Also required for dense-granule secretion in platelets. Also plays a role in regulated enzyme secretion in pancreatic acinar cells. Involved in the abscission of the midbody during cell division, which leads to completely separate daughter cells. Involved in the homotypic fusion of early and late endosomes. Also participates in the activation of type I interferon antiviral response through a TRIM6-dependent mechanism. The protein is Vesicle-associated membrane protein 8 of Rattus norvegicus (Rat).